A 350-amino-acid chain; its full sequence is N-acetyl-gamma-glutamyl-phosphate reductase (350 aa).

Cys-154 is an active-site residue.

It belongs to the NAGSA dehydrogenase family. Type 1 subfamily.

It is found in the cytoplasm. The catalysed reaction is N-acetyl-L-glutamate 5-semialdehyde + phosphate + NADP(+) = N-acetyl-L-glutamyl 5-phosphate + NADPH + H(+). Its pathway is amino-acid biosynthesis; L-arginine biosynthesis; N(2)-acetyl-L-ornithine from L-glutamate: step 3/4. Its function is as follows. Catalyzes the NADPH-dependent reduction of N-acetyl-5-glutamyl phosphate to yield N-acetyl-L-glutamate 5-semialdehyde. The sequence is that of N-acetyl-gamma-glutamyl-phosphate reductase from Corynebacterium efficiens (strain DSM 44549 / YS-314 / AJ 12310 / JCM 11189 / NBRC 100395).